The sequence spans 233 residues: Glyceraldehyde 3-phosphate phosphatase (233 aa).

Belongs to the HAD-like hydrolase superfamily. It depends on Mg(2+) as a cofactor.

Catalyzes the dephosphorylation of D,L-glyceraldehyde 3-phosphate in vitro. This is Glyceraldehyde 3-phosphate phosphatase from Methanopyrus kandleri (strain AV19 / DSM 6324 / JCM 9639 / NBRC 100938).